The chain runs to 192 residues: Ion-translocating oxidoreductase complex subunit A (192 aa).

The next 6 membrane-spanning stretches (helical) occupy residues 5-25 (LLLL…FLGL), 39-59 (IGMS…SYLV), 65-85 (LPFD…AVVV), 102-122 (ALGI…VALL), 134-154 (AIFG…FSAM), and 171-191 (AIAM…TGLV).

This sequence belongs to the NqrDE/RnfAE family. In terms of assembly, the complex is composed of six subunits: RnfA, RnfB, RnfC, RnfD, RnfE and RnfG.

The protein localises to the cell inner membrane. In terms of biological role, part of a membrane-bound complex that couples electron transfer with translocation of ions across the membrane. The polypeptide is Ion-translocating oxidoreductase complex subunit A (Shewanella piezotolerans (strain WP3 / JCM 13877)).